Reading from the N-terminus, the 283-residue chain is MRVYEALKWASSFLQENGRDENAGEIVLCHVLKTNRTGLLMNMREEITAEQETSFTEFIHKHVEGIPIQYMIGHEMFYGRSFFVNEEVLIPRPETEELIVGVLERIERHFGDEKLHVADIGTGSGAISITLALENKNLHVYTVDIAQESIEVAKENAKTLGAEVTFYHGDLLSPFYETGQKLDVVVSNPPYIPEEDWRGLSPVVKEHEPKRALVGGEDGLDFYRRFMEELPNVLQKKAIVAFEIGVGQGEDVKGLLQQAFPHAHVEVVFDINGKDRMVFAEIE.

Residues 121-125, D144, and N188 contribute to the S-adenosyl-L-methionine site; that span reads GTGSG. Residue 188 to 191 coordinates substrate; the sequence is NPPY.

It belongs to the protein N5-glutamine methyltransferase family. PrmC subfamily.

The enzyme catalyses L-glutaminyl-[peptide chain release factor] + S-adenosyl-L-methionine = N(5)-methyl-L-glutaminyl-[peptide chain release factor] + S-adenosyl-L-homocysteine + H(+). Methylates the class 1 translation termination release factors RF1/PrfA and RF2/PrfB on the glutamine residue of the universally conserved GGQ motif. The protein is Release factor glutamine methyltransferase of Bacillus anthracis.